The sequence spans 962 residues: Translation initiation factor IF-2 (962 aa).

Positions 101 to 366 (AAQTQAAPVR…KKGKKLKLEP (266 aa)) are disordered. Positions 117–141 (DAAKARAEAATRAEARAKAEAEAAK) are enriched in basic and acidic residues. Positions 145–157 (AKAGNKAKPAAQK) are enriched in low complexity. Basic and acidic residues predominate over residues 173 to 216 (KPAEESKAEKAQADKMPSKKPAEPKEKAAKPKHERNGKGKDAKK). A compositionally biased stretch (low complexity) spans 219 to 234 (KPAAPAVPQPVVSAEE). Residues 235 to 269 (QAQRDEEARRAAALRAHQEALLKEKQERQARREAM) are compositionally biased toward basic and acidic residues. The segment covering 270–283 (KQQAEQQAKAAQEA) has biased composition (low complexity). The span at 338–354 (GGRDRNNARNGDDERVR) shows a compositional bias: basic and acidic residues. The region spanning 462–631 (PRPPVVTVMG…LLEAEVLELT (170 aa)) is the tr-type G domain. Positions 471-478 (GHVDHGKT) are G1. Residue 471-478 (GHVDHGKT) participates in GTP binding. Residues 496–500 (GITQH) form a G2 region. The interval 517-520 (DTPG) is G3. GTP contacts are provided by residues 517–521 (DTPGH) and 571–574 (NKID). Residues 571–574 (NKID) are G4. The interval 607–609 (SAK) is G5.

The protein belongs to the TRAFAC class translation factor GTPase superfamily. Classic translation factor GTPase family. IF-2 subfamily.

The protein localises to the cytoplasm. One of the essential components for the initiation of protein synthesis. Protects formylmethionyl-tRNA from spontaneous hydrolysis and promotes its binding to the 30S ribosomal subunits. Also involved in the hydrolysis of GTP during the formation of the 70S ribosomal complex. The chain is Translation initiation factor IF-2 from Neisseria meningitidis serogroup A / serotype 4A (strain DSM 15465 / Z2491).